A 225-amino-acid polypeptide reads, in one-letter code: Small ribosomal subunit protein eS1 (225 aa).

Over residues 206 to 216 (PVEEPAAEEVA) the composition is skewed to acidic residues. The interval 206–225 (PVEEPAAEEVAEAPAAETQE) is disordered.

It belongs to the eukaryotic ribosomal protein eS1 family.

The polypeptide is Small ribosomal subunit protein eS1 (Methanococcus maripaludis (strain C5 / ATCC BAA-1333)).